A 319-amino-acid chain; its full sequence is Ataxin-3 homolog (319 aa).

One can recognise a Josephin domain in the interval 8-179 (ISSIFFERQQ…NSEADDFITL (172 aa)). Cys-21 (nucleophile) is an active-site residue. His-118 functions as the Proton acceptor in the catalytic mechanism. The active site involves Asn-133. 2 UIM domains span residues 218 to 237 (QEDR…KESS) and 242 to 261 (SDED…DPNI). The disordered stretch occupies residues 253 to 319 (MSLSQDPNIP…EKKSQNVPEE (67 aa)). Positions 254 to 267 (SLSQDPNIPSTSAA) are enriched in polar residues. Over residues 295–313 (QQRRDRAKFLEKLEEEKKS) the composition is skewed to basic and acidic residues. Residues 297–300 (RRDR) form an interaction with cdc-48.1 and cdc-48.2 region.

In terms of assembly, forms a complex composed of deubiquitinating enzyme atx-3, adapter ubxn-5 and cdc-48.1. Forms a complex composed of deubiquitinating enzyme atx-3, E4 ubiquitin-protein ligase ufd-2 and cdc-48.1. Interacts (via RRDR motif) with cdc-48.1 (via N-terminus) and cdc-48.2 (via N-terminus); the interaction with cdc-48.1 is not required for atx-3 enzymatic activity. Interacts (via C-terminus) with ubxn-5. May interact with ned-8.

It is found in the cytoplasm. Its subcellular location is the nucleus. The protein resides in the nucleolus. It carries out the reaction Thiol-dependent hydrolysis of ester, thioester, amide, peptide and isopeptide bonds formed by the C-terminal Gly of ubiquitin (a 76-residue protein attached to proteins as an intracellular targeting signal).. Acts as a chain editing deubiquitinating enzyme that binds and cleaves 'Lys-48'-linked polyubiquitin chains, with a preference for chains containing four or more ubiquitin molecules thereby modulating protein degradation by the ubiquitin-proteasome pathway. Probably by regulating the IGF-1-insulin-like pathway, regulates lifespan. Regulates germline DNA double-strand-break repair and apoptosis in response to DNA damage by recruiting E4 ubiquitin-protein ligase ufd-2 to DNA repair foci. Interacts with key regulators of transcription and represses transcription. Acts as a histone-binding protein that regulates transcription. This Caenorhabditis briggsae protein is Ataxin-3 homolog.